The sequence spans 258 residues: D-beta-hydroxybutyrate dehydrogenase (258 aa).

8–32 contributes to the NAD(+) binding site; that stretch reads LVTGSTSGIGLGIAKALAAQGANII. A substrate-binding site is contributed by Ser-140. The active-site Proton acceptor is the Tyr-153.

Belongs to the short-chain dehydrogenases/reductases (SDR) family.

The catalysed reaction is (R)-3-hydroxybutanoate + NAD(+) = acetoacetate + NADH + H(+). The polypeptide is D-beta-hydroxybutyrate dehydrogenase (hbdH1) (Cupriavidus necator (strain ATCC 17699 / DSM 428 / KCTC 22496 / NCIMB 10442 / H16 / Stanier 337) (Ralstonia eutropha)).